The following is a 629-amino-acid chain: tRNA uridine 5-carboxymethylaminomethyl modification enzyme MnmG (629 aa).

FAD-binding positions include 13-18, Val-125, and Ser-180; that span reads GGGHAG. An NAD(+)-binding site is contributed by 273 to 287; that stretch reads GPRYCPSIEDKVMRF. Residue Gln-370 participates in FAD binding.

It belongs to the MnmG family. As to quaternary structure, homodimer. Heterotetramer of two MnmE and two MnmG subunits. FAD is required as a cofactor.

Its subcellular location is the cytoplasm. Its function is as follows. NAD-binding protein involved in the addition of a carboxymethylaminomethyl (cmnm) group at the wobble position (U34) of certain tRNAs, forming tRNA-cmnm(5)s(2)U34. In Salmonella typhi, this protein is tRNA uridine 5-carboxymethylaminomethyl modification enzyme MnmG.